The following is a 267-amino-acid chain: Flap endonuclease Xni (267 aa).

D115 provides a ligand contact to Mg(2+). Residues 171 to 261 form the 5'-3' exonuclease domain; sequence VAPAQLVDFW…LGFNLREIRY (91 aa). The K(+) site is built by L182, V193, and I196. Residues 195–200 form an interaction with DNA region; it reads GIGPKT.

The protein belongs to the Xni family. Mg(2+) serves as cofactor. Requires K(+) as cofactor.

Has flap endonuclease activity. During DNA replication, flap endonucleases cleave the 5'-overhanging flap structure that is generated by displacement synthesis when DNA polymerase encounters the 5'-end of a downstream Okazaki fragment. The polypeptide is Flap endonuclease Xni (Aeromonas hydrophila subsp. hydrophila (strain ATCC 7966 / DSM 30187 / BCRC 13018 / CCUG 14551 / JCM 1027 / KCTC 2358 / NCIMB 9240 / NCTC 8049)).